A 657-amino-acid chain; its full sequence is Polycomb protein suz12-A (657 aa).

Residues threonine 335–proline 363 form a disordered region. The segment covering serine 347–serine 358 has biased composition (low complexity). Residues leucine 413–histidine 436 form a C2H2-type zinc finger. A VEFS-box region spans residues arginine 528–phenylalanine 604.

Belongs to the VEFS (VRN2-EMF2-FIS2-SU(Z)12) family. In terms of assembly, component of the prc2/eed-ezh2 complex.

It is found in the nucleus. Functionally, polycomb group (PcG) protein. Component of the prc2/eed-ezh2 complex, which methylates 'Lys-9' and 'Lys-27' of histone H3, leading to transcriptional repression of the affected target gene. This Danio rerio (Zebrafish) protein is Polycomb protein suz12-A (suz12a).